Reading from the N-terminus, the 303-residue chain is Porphobilinogen deaminase (303 aa).

An S-(dipyrrolylmethanemethyl)cysteine modification is found at Cys-240.

This sequence belongs to the HMBS family. In terms of assembly, monomer. Dipyrromethane is required as a cofactor.

The catalysed reaction is 4 porphobilinogen + H2O = hydroxymethylbilane + 4 NH4(+). Its pathway is porphyrin-containing compound metabolism; protoporphyrin-IX biosynthesis; coproporphyrinogen-III from 5-aminolevulinate: step 2/4. Functionally, tetrapolymerization of the monopyrrole PBG into the hydroxymethylbilane pre-uroporphyrinogen in several discrete steps. The protein is Porphobilinogen deaminase of Stenotrophomonas maltophilia (strain K279a).